The following is a 655-amino-acid chain: A-type voltage-gated potassium channel KCND3 (655 aa).

Over 1-182 (MAAGVAAWLP…FENPHTSTLA (182 aa)) the chain is Cytoplasmic. Residues 6-21 (AAWLPFARAAAIGWMP) are interaction with KCNIP1 and KCNIP2. Residues 70-78 (EKEFFFNED) are interaction with KCNIP1. Positions 104, 110, 131, and 132 each coordinate Zn(2+). Ser-153 is subject to Phosphoserine. A helical transmembrane segment spans residues 183 to 204 (LVFYYVTGFFIAVSVITNVVET). Over 205-223 (VPCGTVPGSKELPCGERYS) the chain is Extracellular. A helical transmembrane segment spans residues 224 to 246 (VAFFCLDTACVMIFTVEYLLRLF). Over 247-253 (AAPSRYR) the chain is Cytoplasmic. A helical transmembrane segment spans residues 254–277 (FIRSVMSIIDVVAIMPYYIGLVMT). The Extracellular segment spans residues 278–283 (NNEDVS). A helical; Voltage-sensor transmembrane segment spans residues 284–306 (GAFVTLRVFRVFRIFKFSRHSQG). The Cytoplasmic segment spans residues 307–318 (LRILGYTLKSCA). The helical transmembrane segment at 319 to 343 (SELGFLLFSLTMAIIIFATVMFYAE) threads the bilayer. The Extracellular segment spans residues 344-352 (KGSSASKFT). The segment at residues 353–366 (SIPASFWYTIVTMT) is an intramembrane region (helical). Residues Thr-367, Leu-368, Gly-369, and Tyr-370 each contribute to the K(+) site. Residues 367–372 (TLGYGD) carry the Selectivity filter motif. The stretch at 367-374 (TLGYGDMV) is an intramembrane region. The helical transmembrane segment at 378–400 (IAGKIFGSICSLSGVLVIALPVP) threads the bilayer. The Cytoplasmic segment spans residues 401 to 655 (VIVSNFSRIY…ASNVVKVSAL (255 aa)). Phosphothreonine is present on Thr-459. The interaction with KCNIP1 and KCNIP2 stretch occupies residues 470–487 (SLIESQHHHLLHCLEKTT). Residues 472–487 (IESQHHHLLHCLEKTT) form a mediates dendritic targeting region. Positions 525–548 (MQNYPSTRSPSLSSHPGLTTTCCS) are enriched in polar residues. Residues 525 to 565 (MQNYPSTRSPSLSSHPGLTTTCCSRRSKKTTHLPNSNLPAT) are disordered. A Phosphoserine; by CaMK2D modification is found at Ser-569. The residue at position 585 (Ser-585) is a Phosphoserine. Positions 615-655 (ISIPTPPALTPEGESRPPPASPGPNTNIPSIASNVVKVSAL) are disordered. A compositionally biased stretch (polar residues) spans 637–647 (GPNTNIPSIAS).

This sequence belongs to the potassium channel family. D (Shal) (TC 1.A.1.2) subfamily. Kv4.3/KCND3 sub-subfamily. As to quaternary structure, homotetramer. Heterotetramer with KCND2. Associates with the regulatory subunits KCNIP3 and KCNIP4. Interacts with KCNE1, KCNE2, SCN1B and KCNAB1 and DLG1. Component of heteromultimeric potassium channels. Identified in potassium channel complexes containing KCND1, KCND2, KCND3, KCNIP1, KCNIP2, KCNIP3, KCNIP4, DPP6 and DPP10. Interacts with KCNIP1; each KCNIP1 monomer interacts with two adjacent KCND3 subunits, through both the N-terminal inactivation ball of a KCND3 subunit and a C-terminal helix from the adjacent KCND3 subunit, clamping them together; this interaction stabilizes the tetrameric form and modulates the channel gating kinetics namely channel activation and inactivation kinetics and rate of recovery from inactivation. Interacts with DPP6; this interaction modulates the channel gating kinetics namely channel activation and inactivation kinetics and rate of recovery from inactivation. Interacts with KCNIP2; each KCNIP2 monomer interacts with two adjacent KCND3 subunits, through both the N-terminal inactivation ball of a KCND3 subunit and a C-terminal helix from the adjacent KCND3 subunit, clamping them together; this interaction modulates the channel gating kinetics. Post-translationally, regulated through phosphorylation at Ser-569 by CaMK2D. As to expression, highly expressed in heart and brain, in particular in cortex, cerebellum, amygdala and caudate nucleus. Detected at lower levels in liver, skeletal muscle, kidney and pancreas.

The protein localises to the cell membrane. It is found in the sarcolemma. The protein resides in the cell projection. It localises to the dendrite. The catalysed reaction is K(+)(in) = K(+)(out). Functionally, pore-forming (alpha) subunit of voltage-gated A-type potassium channels that mediates transmembrane potassium transport in excitable membranes, in brain and heart. In cardiomyocytes, may generate the transient outward potassium current I(To). In neurons, may conduct the transient subthreshold somatodendritic A-type potassium current (ISA). Kinetics properties are characterized by fast activation at subthreshold membrane potentials, rapid inactivation, and quick recovery from inactivation. Channel properties are modulated by interactions with regulatory subunits. Interaction with the regulatory subunits KCNIP1 or KCNIP2 modulates the channel gating kinetics namely channel activation and inactivation kinetics and rate of recovery from inactivation. Likewise, interaction with DPP6 modulates the channel gating kinetics namely channel activation and inactivation kinetics. The chain is A-type voltage-gated potassium channel KCND3 (KCND3) from Homo sapiens (Human).